Here is a 411-residue protein sequence, read N- to C-terminus: Serine hydroxymethyltransferase (411 aa).

Residues L119 and 123 to 125 (GHL) each bind (6S)-5,6,7,8-tetrahydrofolate. K228 carries the post-translational modification N6-(pyridoxal phosphate)lysine. 351 to 353 (SPF) is a binding site for (6S)-5,6,7,8-tetrahydrofolate.

It belongs to the SHMT family. As to quaternary structure, homodimer. The cofactor is pyridoxal 5'-phosphate.

It localises to the cytoplasm. The enzyme catalyses (6R)-5,10-methylene-5,6,7,8-tetrahydrofolate + glycine + H2O = (6S)-5,6,7,8-tetrahydrofolate + L-serine. It functions in the pathway one-carbon metabolism; tetrahydrofolate interconversion. The protein operates within amino-acid biosynthesis; glycine biosynthesis; glycine from L-serine: step 1/1. Functionally, catalyzes the reversible interconversion of serine and glycine with tetrahydrofolate (THF) serving as the one-carbon carrier. This reaction serves as the major source of one-carbon groups required for the biosynthesis of purines, thymidylate, methionine, and other important biomolecules. Also exhibits THF-independent aldolase activity toward beta-hydroxyamino acids, producing glycine and aldehydes, via a retro-aldol mechanism. The protein is Serine hydroxymethyltransferase of Clostridium botulinum (strain Eklund 17B / Type B).